Consider the following 78-residue polypeptide: Conotoxin Cl14.9 (78 aa).

Residues 1-22 form the signal peptide; that stretch reads MTAKATLLVLALVVMATSGVSS. A propeptide spanning residues 23 to 47 is cleaved from the precursor; it reads ASVAGGPVVNSDTVSRSDPERLSTR. At Ile70 the chain carries Isoleucine amide. A propeptide spanning residues 74–78 is cleaved from the precursor; sequence DITQQ.

In terms of processing, contains 2 disulfide bonds. Expressed by the venom duct.

The protein resides in the secreted. The polypeptide is Conotoxin Cl14.9 (Californiconus californicus (California cone)).